Here is an 862-residue protein sequence, read N- to C-terminus: MAGEERPERIVVSVRLRPVNAREAERGDGSDWECAGPTTLTFRGAVPERAMFPASYSYDRVFSHECGTRQVYDEGARQVAMSVLSGINASIFAYGQTSSGKTYTMVGITEYSMSDIYDYIEKHPEREFILKFSAMEIYNEAVRDLLSSDATPLRLLDDPEKGTVVEKLTEETLRDKGHLLELLAVCEAQRQIGETAMNEASSRSHQILRMTVESSAKQFLGKGNSSTLIACVNFVDLAGSERASQTASAGMRLKEGSHINRSLLTLGKVIRQLSKGRNGHIPYRDSKLTRILQSSLGGNARTAIICTMSPAHCHIEQSRNTLLFANCAKDVVTNAQVNVVMSDKALVKHLQREIARLENELKFPASASCTSHAEILREKDELIKNLEEQLKELMEQKDTVQSQLDNFRKVASDGDINNHLARRWSRSSDSIPRIVSEGAFSSSDTQDIDYQDQTMDELSVPHSFPPSSQISDITEEHEAQRVAHRAESEPPEEHCKEVQCIETNKLRSRRSQEFFQTPEKKTHTDDQKHSESMSNSAENAIKLYACDFEPSFDLEKPETEESLALKRCVVSSRDSALTRSRSCRASFMVIPNSWFDDSASTTPSSETFRYSTRRPEKVRKSLSPDEIADKSTGNAEEDKSTCNAEEETAVNDIGCVTEVKQKTEMNHAPQSSEQHQPKIAKEVATVSLSKWHIDFERKQQEIIELWHDCNVSIVHRTYFFLLFKGDQTDSIYMEVEHRRLSFIKNSLIADGELHATTASSLRNLRHERDMLYRQMVRKLHLAEKERLYGKWGIDMSTKQRRLQLSRRIWTQTGMDHVRESAALVAKLVEHLEKGQAIREMFGLSFSFKPRRSFSWVGVYSRD.

Residues 9–331 (RIVVSVRLRP…LLFANCAKDV (323 aa)) enclose the Kinesin motor domain. 95–102 (GQTSSGKT) is a binding site for ATP. Residues 340–415 (VMSDKALVKH…NFRKVASDGD (76 aa)) adopt a coiled-coil conformation. Basic and acidic residues-rich tracts occupy residues 475-499 (EEHE…KEVQ) and 518-531 (PEKK…KHSE). 2 disordered regions span residues 475-532 (EEHE…HSES) and 596-643 (DDSA…STCN). Residues 598-610 (SASTTPSSETFRY) show a composition bias toward polar residues. Residues 613–629 (RRPEKVRKSLSPDEIAD) show a composition bias toward basic and acidic residues.

Belongs to the TRAFAC class myosin-kinesin ATPase superfamily. Kinesin family. KIN-7 subfamily.

The sequence is that of Kinesin-like protein KIN-7J from Oryza sativa subsp. japonica (Rice).